The sequence spans 516 residues: Methionine--tRNA ligase (516 aa).

Residues 13–23 (FYPNGKPHIGH) carry the 'HIGH' region motif. A 'KMSKS' region motif is present at residues 299 to 303 (KMSKS). Lys-302 is an ATP binding site.

Belongs to the class-I aminoacyl-tRNA synthetase family. MetG type 2B subfamily. In terms of assembly, monomer.

It is found in the cytoplasm. It carries out the reaction tRNA(Met) + L-methionine + ATP = L-methionyl-tRNA(Met) + AMP + diphosphate. Its function is as follows. Is required not only for elongation of protein synthesis but also for the initiation of all mRNA translation through initiator tRNA(fMet) aminoacylation. This Mesorhizobium japonicum (strain LMG 29417 / CECT 9101 / MAFF 303099) (Mesorhizobium loti (strain MAFF 303099)) protein is Methionine--tRNA ligase.